The chain runs to 828 residues: MKTTMAAAATCLVALLVVVLAEAAGVGCTTVAYNDRSLVIDGERRIIISGSIHYPRSTPEMWPDLIKKAKEGGLDAIETYVFWNGHEPHRRQYNFEGNYDIIRFFKEIQNAGLYAILRIGPYICGEWNYGGLPAWLRDIPQMQFRMHNAPFENEMENFTTLIINKMKDANMFAGQGGPIILAQIENEYGNVMGQLNNNQSASEYIHWCADMANKQNVGVPWIMCQQDSDVPHNVVNTCNGFYCHDWFPNRTGIPKIWTENWTGWFKAWDKPDFHRSAEDIAFAVAMFFQKRGSLQNYYMYHGGTNFGRTSGGPYITTSYDYDAPLDEYGNLRQPKYGHLKDLHSVIKSIEKILVHGEYVDANYSDNVTVTKYTLGSTSACFINNRNDNKDLNVTLDGNTHLLPAWSVSILPDCKTVAFNSAKIKAQTTIMVKKANMVEKEPESLKWSWMRENLTPFMTDEKGSYRKNELLEQIVTSTDQSDYLWYRTSLDHKGEASYTLFVNTTGHELYAFVNGMLVGKNHSPNGHFVFQLESAVKLHDGKNYISLLSATIGLKNYGPLFEKMPAGIVGGPVKLIDNNGTGIDLSNSSWSYKAGLAGEYRQIHLDKPGYRWDNNNGTVPINRPFTWYKTTFQAPAGQDTVVVDLLGLNKGVAWVNGNNLGRYWPSYTAAEMGGCHHCDYRGVFQAEGDGQKCLTGCGEPSQRYYHVPRSFLKNGEPNTLILFEEAGGDPSQVIFHSVVAGSVCVSAEVGDAITLSCGQHSKTISTIDVTSFGVARGQCGAYEGGCESKAAYKAFTEACLGKESCTVQIINALTGSGCLSGVLTVQASC.

The first 23 residues, 1–23, serve as a signal peptide directing secretion; it reads MKTTMAAAATCLVALLVVVLAEA. An N-linked (GlcNAc...) asparagine glycan is attached at Asn-157. The active-site Proton donor is the Glu-187. Residues Asn-198 and Asn-249 are each glycosylated (N-linked (GlcNAc...) asparagine). Glu-259 acts as the Nucleophile in catalysis. Asn-260, Asn-362, Asn-366, Asn-392, Asn-502, Asn-578, Asn-586, and Asn-615 each carry an N-linked (GlcNAc...) asparagine glycan. Positions 746 to 828 constitute an SUEL-type lectin domain; sequence AEVGDAITLS…SGVLTVQASC (83 aa).

It belongs to the glycosyl hydrolase 35 family.

The protein resides in the secreted. Its subcellular location is the extracellular space. It localises to the apoplast. It catalyses the reaction Hydrolysis of terminal non-reducing beta-D-galactose residues in beta-D-galactosides.. The polypeptide is Beta-galactosidase 13 (Oryza sativa subsp. japonica (Rice)).